Reading from the N-terminus, the 231-residue chain is Small ribosomal subunit protein uS3 (231 aa).

The KH type-2 domain occupies 39–107 (VREFLKEKLK…PAQINIAEVR (69 aa)).

This sequence belongs to the universal ribosomal protein uS3 family. Part of the 30S ribosomal subunit. Forms a tight complex with proteins S10 and S14.

Functionally, binds the lower part of the 30S subunit head. Binds mRNA in the 70S ribosome, positioning it for translation. This chain is Small ribosomal subunit protein uS3, found in Colwellia psychrerythraea (strain 34H / ATCC BAA-681) (Vibrio psychroerythus).